Reading from the N-terminus, the 256-residue chain is Enkurin (256 aa).

Positions 48 to 92 are disordered; it reads TMGPAKLEVPSPKDFLKKHSKEKTLPPKKKFDRHEPKKPPVPLRT. A compositionally biased stretch (basic and acidic residues) spans 61-72; the sequence is DFLKKHSKEKTL. The short motif at 83–89 is the SH3-binding element; sequence PKKPPVP. In terms of domain architecture, Enkurin spans 160 to 252; that stretch reads KRNEEVKKAQ…VLEKHKIIYI (93 aa). Positions 176–187 constitute an IQ domain; it reads IQENLRKAAMKR.

As to quaternary structure, microtubule inner protein component of sperm flagellar doublet microtubules. Binds calmodulin via its IQ domain. Interacts with TRPC1, TRPC2, TRPC5, but not TRPC3. Interacts with CFAP45.

It is found in the cytoplasm. The protein localises to the cytoskeleton. Its subcellular location is the cilium axoneme. It localises to the flagellum axoneme. Functionally, adapter that functions to localize a calcium-sensitive signal transduction machinery in sperm to a calcium-permeable ion channel. Microtubule inner protein (MIP) part of the dynein-decorated doublet microtubules (DMTs) in cilia axoneme, which is required for motile cilia beating. The sequence is that of Enkurin (ENKUR) from Sus scrofa (Pig).